Reading from the N-terminus, the 487-residue chain is Betaine aldehyde dehydrogenase (487 aa).

Positions 27 and 93 each coordinate K(+). 149 to 151 provides a ligand contact to NAD(+); that stretch reads GAW. Catalysis depends on Lys-161, which acts as the Charge relay system. NAD(+) contacts are provided by residues 175–178 and 228–231; these read KPSE and SVPT. Position 243 (Leu-243) interacts with K(+). The active-site Proton acceptor is Glu-249. Residues Gly-251, Cys-283, and Glu-384 each coordinate NAD(+). Cys-283 functions as the Nucleophile in the catalytic mechanism. At Cys-283 the chain carries Cysteine sulfenic acid (-SOH). Residues Lys-454 and Gly-457 each contribute to the K(+) site. Glu-461 acts as the Charge relay system in catalysis.

It belongs to the aldehyde dehydrogenase family. Dimer of dimers. K(+) is required as a cofactor.

It catalyses the reaction betaine aldehyde + NAD(+) + H2O = glycine betaine + NADH + 2 H(+). It functions in the pathway amine and polyamine biosynthesis; betaine biosynthesis via choline pathway; betaine from betaine aldehyde: step 1/1. In terms of biological role, involved in the biosynthesis of the osmoprotectant glycine betaine. Catalyzes the irreversible oxidation of betaine aldehyde to the corresponding acid. The chain is Betaine aldehyde dehydrogenase from Brucella suis (strain ATCC 23445 / NCTC 10510).